The following is a 185-amino-acid chain: ATP-dependent protease subunit HslV (185 aa).

The active site involves threonine 12. Na(+) is bound by residues alanine 168, cysteine 171, and threonine 174.

The protein belongs to the peptidase T1B family. HslV subfamily. A double ring-shaped homohexamer of HslV is capped on each side by a ring-shaped HslU homohexamer. The assembly of the HslU/HslV complex is dependent on binding of ATP.

The protein localises to the cytoplasm. The catalysed reaction is ATP-dependent cleavage of peptide bonds with broad specificity.. With respect to regulation, allosterically activated by HslU binding. Its function is as follows. Protease subunit of a proteasome-like degradation complex believed to be a general protein degrading machinery. In Cereibacter sphaeroides (strain ATCC 17025 / ATH 2.4.3) (Rhodobacter sphaeroides), this protein is ATP-dependent protease subunit HslV.